Reading from the N-terminus, the 315-residue chain is Epithelial cell adhesion molecule (315 aa).

Positions methionine 1–alanine 23 are cleaved as a signal peptide. The Extracellular segment spans residues glutamine 24–threonine 266. 6 disulfide bridges follow: cysteine 27–cysteine 46, cysteine 29–cysteine 59, cysteine 38–cysteine 48, cysteine 66–cysteine 99, cysteine 110–cysteine 116, and cysteine 118–cysteine 135. A Thyroglobulin type-1 domain is found at alanine 63 to cysteine 135. A glycan (N-linked (GlcNAc...) asparagine) is linked at asparagine 111. Residue asparagine 198 is glycosylated (N-linked (GlcNAc...) asparagine). Residues alanine 267–isoleucine 289 traverse the membrane as a helical segment. Over serine 290–alanine 315 the chain is Cytoplasmic.

The protein belongs to the EPCAM family. As to quaternary structure, monomer. Interacts with phosphorylated CLDN7. Post-translationally, glycosylation at Asn-198 is crucial for protein stability.

Its subcellular location is the lateral cell membrane. It is found in the cell junction. The protein localises to the tight junction. In terms of biological role, may act as a physical homophilic interaction molecule between intestinal epithelial cells (IECs) and intraepithelial lymphocytes (IELs) at the mucosal epithelium for providing immunological barrier as a first line of defense against mucosal infection. Plays a role in embryonic stem cells proliferation and differentiation. Up-regulates the expression of FABP5, MYC and cyclins A and E. This is Epithelial cell adhesion molecule (Epcam) from Mus musculus (Mouse).